The following is a 1188-amino-acid chain: DNA-directed RNA polymerase subunit beta (1188 aa).

Residues 1149–1188 (ELRDLDEGEDDDVMHVDDLEKAREKQAQETPEVSENSEEK) are disordered. Over residues 1161–1175 (VMHVDDLEKAREKQA) the composition is skewed to basic and acidic residues.

The protein belongs to the RNA polymerase beta chain family. In terms of assembly, the RNAP catalytic core consists of 2 alpha, 1 beta, 1 beta' and 1 omega subunit. When a sigma factor is associated with the core the holoenzyme is formed, which can initiate transcription.

It carries out the reaction RNA(n) + a ribonucleoside 5'-triphosphate = RNA(n+1) + diphosphate. DNA-dependent RNA polymerase catalyzes the transcription of DNA into RNA using the four ribonucleoside triphosphates as substrates. The sequence is that of DNA-directed RNA polymerase subunit beta from Streptococcus uberis (strain ATCC BAA-854 / 0140J).